A 687-amino-acid chain; its full sequence is DnaJ protein ERDJ2A (687 aa).

Over 1–8 the chain is Lumenal; sequence MAASEENS. Residues 9 to 29 form a helical membrane-spanning segment; that stretch reads ALFPIFILTIMAIPLVPYTMV. Over 30–65 the chain is Cytoplasmic; sequence KLSGALSKKQRTIHCQCLECDRSGKYKRSLFKKISN. A helical transmembrane segment spans residues 66 to 86; that stretch reads FSTWSNLTLVLLWVVMIFLIY. Topologically, residues 87 to 190 are lumenal; the sequence is YTKNMSREAQ…FLLDIDGASG (104 aa). A glycan (N-linked (GlcNAc...) asparagine) is linked at asparagine 90. The 66-residue stretch at 99–164 folds into the J domain; the sequence is DPFSILGLEP…VSRENFEKYG (66 aa). A helical membrane pass occupies residues 191–211; the sequence is GILLLWIVGVCILLPLVIAVI. Residues 205 to 603 form the SEC63 domain; that stretch reads PLVIAVIYLS…IGCDKKQALK (399 aa). The Cytoplasmic segment spans residues 212–687; it reads YLSRSSKYTG…SSEESGSEEE (476 aa). The segment at 619 to 687 is disordered; sequence SDEGAIAEEG…SSEESGSEEE (69 aa). Acidic residues predominate over residues 623–654; sequence AIAEEGMEEEDEIEEEDYDDDYESEYSEDEDE.

Interacts with OEP61/TPR7. As to expression, expressed in leaves, flower buds and flowers.

The protein resides in the endoplasmic reticulum membrane. Functionally, required for integral membrane and secreted preprotein translocation across the endoplasmic reticulum membrane. The protein is DnaJ protein ERDJ2A (ERDJ2A) of Arabidopsis thaliana (Mouse-ear cress).